A 158-amino-acid polypeptide reads, in one-letter code: uncharacterized protein (158 aa).

The next 2 membrane-spanning stretches (helical) occupy residues 10 to 30 (LFFI…LNHF) and 40 to 60 (YITF…NFFL).

The protein resides in the membrane. This is an uncharacterized protein from Schizosaccharomyces pombe (strain 972 / ATCC 24843) (Fission yeast).